The following is a 145-amino-acid chain: Large ribosomal subunit protein uL11 (145 aa).

Belongs to the universal ribosomal protein uL11 family. Part of the ribosomal stalk of the 50S ribosomal subunit. Interacts with L10 and the large rRNA to form the base of the stalk. L10 forms an elongated spine to which L12 dimers bind in a sequential fashion forming a multimeric L10(L12)X complex. Post-translationally, one or more lysine residues are methylated.

Its function is as follows. Forms part of the ribosomal stalk which helps the ribosome interact with GTP-bound translation factors. The sequence is that of Large ribosomal subunit protein uL11 from Coxiella burnetii (strain CbuK_Q154) (Coxiella burnetii (strain Q154)).